Here is a 246-residue protein sequence, read N- to C-terminus: tRNA pseudouridine synthase A (246 aa).

Aspartate 52 serves as the catalytic Nucleophile. Tyrosine 111 contributes to the substrate binding site.

The protein belongs to the tRNA pseudouridine synthase TruA family. As to quaternary structure, homodimer.

The catalysed reaction is uridine(38/39/40) in tRNA = pseudouridine(38/39/40) in tRNA. Its function is as follows. Formation of pseudouridine at positions 38, 39 and 40 in the anticodon stem and loop of transfer RNAs. The polypeptide is tRNA pseudouridine synthase A (Fervidobacterium nodosum (strain ATCC 35602 / DSM 5306 / Rt17-B1)).